Consider the following 571-residue polypeptide: Kelch-like protein 28 (571 aa).

The BTB domain occupies C35 to Q102. 6 Kelch repeats span residues V284–Q331, K332–G386, E387–G433, I435–G479, F480–N526, and L528–A570.

This chain is Kelch-like protein 28 (KLHL28), found in Homo sapiens (Human).